A 124-amino-acid chain; its full sequence is S-adenosylmethionine decarboxylase proenzyme (124 aa).

The Schiff-base intermediate with substrate; via pyruvic acid role is filled by S63. The residue at position 63 (S63) is a Pyruvic acid (Ser); by autocatalysis. H68 functions as the Proton acceptor; for processing activity in the catalytic mechanism. The active-site Proton donor; for catalytic activity is the C83.

The protein belongs to the prokaryotic AdoMetDC family. Type 1 subfamily. In terms of assembly, heterotetramer of two alpha and two beta chains arranged as a dimer of alpha/beta heterodimers. Pyruvate is required as a cofactor. Post-translationally, is synthesized initially as an inactive proenzyme. Formation of the active enzyme involves a self-maturation process in which the active site pyruvoyl group is generated from an internal serine residue via an autocatalytic post-translational modification. Two non-identical subunits are generated from the proenzyme in this reaction, and the pyruvate is formed at the N-terminus of the alpha chain, which is derived from the carboxyl end of the proenzyme. The post-translation cleavage follows an unusual pathway, termed non-hydrolytic serinolysis, in which the side chain hydroxyl group of the serine supplies its oxygen atom to form the C-terminus of the beta chain, while the remainder of the serine residue undergoes an oxidative deamination to produce ammonia and the pyruvoyl group blocking the N-terminus of the alpha chain.

The enzyme catalyses S-adenosyl-L-methionine + H(+) = S-adenosyl 3-(methylsulfanyl)propylamine + CO2. It participates in amine and polyamine biosynthesis; S-adenosylmethioninamine biosynthesis; S-adenosylmethioninamine from S-adenosyl-L-methionine: step 1/1. Catalyzes the decarboxylation of S-adenosylmethionine to S-adenosylmethioninamine (dcAdoMet), the propylamine donor required for the synthesis of the polyamines spermine and spermidine from the diamine putrescine. This chain is S-adenosylmethionine decarboxylase proenzyme, found in Caldanaerobacter subterraneus subsp. tengcongensis (strain DSM 15242 / JCM 11007 / NBRC 100824 / MB4) (Thermoanaerobacter tengcongensis).